Here is a 64-residue protein sequence, read N- to C-terminus: Putative antitoxin AF_1074 (64 aa).

This sequence belongs to the UPF0165 family.

Possibly the antitoxin component of a type II toxin-antitoxin (TA) system. The chain is Putative antitoxin AF_1074 from Archaeoglobus fulgidus (strain ATCC 49558 / DSM 4304 / JCM 9628 / NBRC 100126 / VC-16).